The chain runs to 534 residues: Pentatricopeptide repeat-containing protein At1g07590, mitochondrial (534 aa).

Residues M1 to R20 constitute a mitochondrion transit peptide. PPR repeat units follow at residues N165–T199, S200–P234, H235–P269, N270–S300, N305–F335, R339–V369, E374–P408, N409–K443, and W451–R485.

It belongs to the PPR family. P subfamily.

The protein resides in the mitochondrion. The chain is Pentatricopeptide repeat-containing protein At1g07590, mitochondrial from Arabidopsis thaliana (Mouse-ear cress).